A 158-amino-acid chain; its full sequence is MNAWMILAAEAVQEAEGGLFDLDATLPLMAVQILVLVFLLNAVFYKPFGKVLDDRDQFVRGGRQDAKARLAEVKALTAQYEQELAATRKQSQALIAEAQTEAGRIAAQQLAEAQREAQAQREQAQQEIDQQKAVALQALDQQVDALSHQILDKLLARA.

The chain crosses the membrane as a helical span at residues 24–44 (ATLPLMAVQILVLVFLLNAVF).

The protein belongs to the ATPase B chain family. As to quaternary structure, F-type ATPases have 2 components, F(1) - the catalytic core - and F(0) - the membrane proton channel. F(1) has five subunits: alpha(3), beta(3), gamma(1), delta(1), epsilon(1). F(0) has four main subunits: a(1), b(1), b'(1) and c(10-14). The alpha and beta chains form an alternating ring which encloses part of the gamma chain. F(1) is attached to F(0) by a central stalk formed by the gamma and epsilon chains, while a peripheral stalk is formed by the delta, b and b' chains.

It localises to the cellular thylakoid membrane. Functionally, f(1)F(0) ATP synthase produces ATP from ADP in the presence of a proton or sodium gradient. F-type ATPases consist of two structural domains, F(1) containing the extramembraneous catalytic core and F(0) containing the membrane proton channel, linked together by a central stalk and a peripheral stalk. During catalysis, ATP synthesis in the catalytic domain of F(1) is coupled via a rotary mechanism of the central stalk subunits to proton translocation. Its function is as follows. Component of the F(0) channel, it forms part of the peripheral stalk, linking F(1) to F(0). The b'-subunit is a diverged and duplicated form of b found in plants and photosynthetic bacteria. This chain is ATP synthase subunit b', found in Synechococcus elongatus (strain ATCC 33912 / PCC 7942 / FACHB-805) (Anacystis nidulans R2).